The primary structure comprises 420 residues: Interleukin-5 receptor subunit alpha (420 aa).

The signal sequence occupies residues 1–20 (MIIVAHVLLILLGATEILQA). The Extracellular portion of the chain corresponds to 21–342 (DLLPDEKISL…NDEHKPLREW (322 aa)). The region spanning 32–123 (PPVNFTIKVT…ASAELHAPPG (92 aa)) is the Fibronectin type-III 1 domain. N-linked (GlcNAc...) asparagine glycans are attached at residues N35 and N131. Cystine bridges form between C134-C155 and C182-C196. 2 N-linked (GlcNAc...) asparagine glycosylation sites follow: N216 and N244. Positions 241-334 (PPLNVTAEIE…WSQPIYVGND (94 aa)) constitute a Fibronectin type-III 2 domain. C269 and C316 form a disulfide bridge. The WSXWS motif motif lies at 322–326 (WSEWS). A helical membrane pass occupies residues 343–362 (FVIVIMATICFILLILSLIC). Residues 363-420 (KICHLWIKLFPPIPAPKSNIKDLFVTTNYEKAGSSETEIEVICYIEKPGVETLEDSVF) lie on the Cytoplasmic side of the membrane. The Box 1 motif motif lies at 371–379 (LFPPIPAPK).

It belongs to the type I cytokine receptor family. Type 5 subfamily. In terms of assembly, interacts with IL5. Interacts with CSF2RB. Interacts with JAK2. Interacts with SDCBP. Expressed on eosinophils and basophils.

The protein localises to the membrane. Cell surface receptor that plays an important role in the survival, differentiation, and chemotaxis of eosinophils. Acts by forming a heterodimeric receptor with CSF2RB subunit and subsequently binding to interleukin-5. In unstimulated conditions, interacts constitutively with JAK2. Heterodimeric receptor activation leads to JAK2 stimulation and subsequent activation of the JAK-STAT pathway. This chain is Interleukin-5 receptor subunit alpha (IL5RA), found in Homo sapiens (Human).